Reading from the N-terminus, the 465-residue chain is Hydroxyacid-oxoacid transhydrogenase, mitochondrial (465 aa).

Lys443 bears the N6-acetyllysine mark. Ser450 is modified (phosphoserine).

It belongs to the iron-containing alcohol dehydrogenase family. Hydroxyacid-oxoacid transhydrogenase subfamily. As to expression, expressed in white and brown adipose tissues, liver, and kidney. Expression is differentiation-dependent during in vitro brown and white adipogenesis.

Its subcellular location is the mitochondrion. The catalysed reaction is (S)-3-hydroxybutanoate + 2-oxoglutarate = (R)-2-hydroxyglutarate + acetoacetate. It carries out the reaction 4-hydroxybutanoate + 2-oxoglutarate = (R)-2-hydroxyglutarate + succinate semialdehyde. Its function is as follows. Catalyzes the cofactor-independent reversible oxidation of gamma-hydroxybutyrate (GHB) to succinic semialdehyde (SSA) coupled to reduction of 2-ketoglutarate (2-KG) to D-2-hydroxyglutarate (D-2-HG). L-3-hydroxybutyrate (L-3-OHB) is also a substrate for HOT when using 2-KG as hydrogen acceptor, resulting in the formation of D-2-HG. In Mus musculus (Mouse), this protein is Hydroxyacid-oxoacid transhydrogenase, mitochondrial (Adhfe1).